The chain runs to 316 residues: Olfactory receptor 10H3 (316 aa).

Topologically, residues 1–25 (MPGQNYRTISEFILSGFSAFPQQLL) are extracellular. A helical transmembrane segment spans residues 26-46 (PVLFLLYLLMFLFTLLGNLLI). Residues 47-54 (MATVWIER) lie on the Cytoplasmic side of the membrane. A helical transmembrane segment spans residues 55–75 (RLHTPMYLFLCALSISEILFT). The Extracellular portion of the chain corresponds to 76-99 (VAITPRMLADLLFTHRSITFVACA). A disulfide bond links C98 and C190. Residues 100–120 (IQMFFSFMFGFTHSFLLMVMG) form a helical membrane-spanning segment. The Cytoplasmic segment spans residues 121–139 (YDHYVTICHPLHYNMLMSP). The helical transmembrane segment at 140–160 (RGCAHLVAWTWAGGSVMGMMV) threads the bilayer. The Extracellular segment spans residues 161 to 197 (TMMVFHLTFCGSNVIHHFLCHVLSLLKLACGSKTSSV). A helical membrane pass occupies residues 198–218 (IMGVMLVCVTALIGCLFLIIL). Over 219-238 (SFVFIVAAILRIPSAEGRHK) the chain is Cytoplasmic. The helical transmembrane segment at 239–259 (TFSTCVSHLTVVVMHYSFASL) threads the bilayer. Residues 260–272 (IYLKPKGLHSMYS) lie on the Extracellular side of the membrane. Residues 273–293 (DALMATTYTVFTPFLSPIIFS) traverse the membrane as a helical segment. Over 294 to 316 (LRNKELKNAINKNFCRRFCPLSS) the chain is Cytoplasmic.

The protein belongs to the G-protein coupled receptor 1 family.

The protein localises to the cell membrane. Odorant receptor. The chain is Olfactory receptor 10H3 (OR10H3) from Homo sapiens (Human).